We begin with the raw amino-acid sequence, 131 residues long: Methylglyoxal synthase (131 aa).

Residues 1–131 form the MGS-like domain; sequence MKIALIAHDK…GDLDYRKLRK (131 aa). Residues H8, K12, 34-37, and 54-55 each bind substrate; these read TGTT and SG. D60 functions as the Proton donor/acceptor in the catalytic mechanism. H87 is a substrate binding site.

It belongs to the methylglyoxal synthase family.

It catalyses the reaction dihydroxyacetone phosphate = methylglyoxal + phosphate. In terms of biological role, catalyzes the formation of methylglyoxal from dihydroxyacetone phosphate. The polypeptide is Methylglyoxal synthase (Bacillus mycoides (strain KBAB4) (Bacillus weihenstephanensis)).